The sequence spans 172 residues: Adenine phosphoribosyltransferase (172 aa).

Belongs to the purine/pyrimidine phosphoribosyltransferase family. As to quaternary structure, homodimer.

Its subcellular location is the cytoplasm. It carries out the reaction AMP + diphosphate = 5-phospho-alpha-D-ribose 1-diphosphate + adenine. It participates in purine metabolism; AMP biosynthesis via salvage pathway; AMP from adenine: step 1/1. Its function is as follows. Catalyzes a salvage reaction resulting in the formation of AMP, that is energically less costly than de novo synthesis. The protein is Adenine phosphoribosyltransferase of Anaeromyxobacter dehalogenans (strain 2CP-1 / ATCC BAA-258).